The sequence spans 609 residues: MWRLPGVRAALRGVRTAVERRSRTEAASETSVGAMERAVVRCVPSEPKLSLSFALADGSHKNMQRDQSEPLGRALSRIATNALKGHAKVAAAKKSRKNRPNAGSGVACAGPGPEPAAACEPVVKLYYREEAVAEDVLNVDAWQDGAVLQIGDVKYKVERNPPAFTELQLPRYIMAGFPVCPKLGVEFGDPTGSLFRWYKETKPRAAEPEGGGPSSSSPSSPSPGWTETGVDERVYTPSNADIGLRLKLHCTPGNGQRFGPSRELESVCPVEAGPGTCTFDHRHLYTKKVTDDALIRTVSYNILADTYAQTEFSRTVLYPYCAPYALELDYRQNLIQKELTGYNADLICLQEVDRCVFTDSLMPALEAFGLEGVFRIKQHEGLATFYRKSKFSLLSQHDIAFHEALQSDPLHKELLEKLALYPSAQERVLQRSSVVQVSVLQSTKDSSKKICVANTHLYWHPKGGYIRLIQMAVALAHIRHVSCDLYPGIPVIFCGDFNSTPSTGMYHFVINGSIAEDHEDWTSNGEEERCNMSLSHFFKLKSACGEPAYTNYVGGFHGCLDYIFIDLHALEVEQVIPLPSHEEVTTHQALPSVSHPSDHIALVCDLKWK.

A mitochondrion-targeting transit peptide spans 1 to 16; the sequence is MWRLPGVRAALRGVRT. The interval 203-231 is disordered; sequence PRAAEPEGGGPSSSSPSSPSPGWTETGVD. A compositionally biased stretch (low complexity) spans 214-224; sequence SSSSPSSPSPG. Ser217 is modified (phosphoserine). 3 residues coordinate Mg(2+): Glu351, Asp496, and Asn498. The Proton donor/acceptor role is filled by Asp496.

Belongs to the CCR4/nocturin family. It depends on Mg(2+) as a cofactor. In terms of tissue distribution, liver.

It is found in the mitochondrion matrix. It carries out the reaction Exonucleolytic cleavage of poly(A) to 5'-AMP.. Functionally, enzyme that cleaves 2',5'-phosphodiester bond linking adenosines of the 5'-triphosphorylated oligoadenylates, triphosphorylated oligoadenylates referred as 2-5A modulates the 2-5A system. Degrades triphosphorylated 2-5A to produce AMP and ATP. Also cleaves 3',5'-phosphodiester bond of oligoadenylates. Plays a role as a negative regulator of the 2-5A system that is one of the major pathways for antiviral and antitumor functions induced by interferons (IFNs). Suppression of this enzyme increases cellular 2-5A levels and decreases viral replication in cultured small-airway epithelial cells. In Bos taurus (Bovine), this protein is 2',5'-phosphodiesterase 12 (PDE12).